The sequence spans 219 residues: Poxin (219 aa).

The active-site Proton donor is the His17. Tyr138 functions as the Shared with catalytic histidine of dimeric partner in the catalytic mechanism. Catalysis depends on Lys142, which acts as the Proton acceptor; shared with catalytic histidine of dimeric partner.

The protein belongs to the poxin family. In terms of assembly, homodimer.

It carries out the reaction 2',3'-cGAMP + H2O = Gp(2'-5')Ap(3') + H(+). Nuclease that is responsible for viral evasion of host cGAS-STING innate immunity. Cleaves 2',3'-cGAMP which is produced by host cGAS following recognition of cytosolic DNA and blocks the subsequent 2',3'-cGAMP-mediated activation of TMEM173/STING, which normally spreads to adjacent cells and activates the interferon and NF-kappa-B immune responses. The polypeptide is Poxin (OPG188) (Bos taurus (Bovine)).